The sequence spans 156 residues: Small ribosomal subunit protein uS7 (156 aa).

It belongs to the universal ribosomal protein uS7 family. As to quaternary structure, part of the 30S ribosomal subunit. Contacts proteins S9 and S11.

In terms of biological role, one of the primary rRNA binding proteins, it binds directly to 16S rRNA where it nucleates assembly of the head domain of the 30S subunit. Is located at the subunit interface close to the decoding center, probably blocks exit of the E-site tRNA. The polypeptide is Small ribosomal subunit protein uS7 (Mycobacterium leprae (strain TN)).